A 550-amino-acid polypeptide reads, in one-letter code: Mitochondrial distribution and morphology protein 34 (550 aa).

Residues 1-208 enclose the SMP-LTD domain; the sequence is MAFNFNWSPL…CPEQMSKEDH (208 aa). Disordered regions lie at residues 294–313, 358–505, and 519–550; these read VDKP…LVKS, RNAK…ILEQ, and VYDE…TAAS. The span at 300–310 shows a compositional bias: low complexity; the sequence is SSTTPLTTPSL. Residues 364-376 are compositionally biased toward basic residues; the sequence is ANRKKKTRVVNLR. Polar residues-rich tracts occupy residues 391 to 407 and 458 to 467; these read MSDS…TMSD and AEISQPQVAR. Residues 481–495 show a composition bias toward basic and acidic residues; the sequence is SENDKRSDSKRRGPR.

The protein belongs to the MDM34 family. In terms of assembly, component of the ER-mitochondria encounter structure (ERMES) or MDM complex, composed of MMM1, MDM10, MDM12 and MDM34.

The protein localises to the mitochondrion outer membrane. Component of the ERMES/MDM complex, which serves as a molecular tether to connect the endoplasmic reticulum (ER) and mitochondria. Components of this complex are involved in the control of mitochondrial shape and protein biogenesis, and function in nonvesicular lipid trafficking between the ER and mitochondria. MDM34 is required for the interaction of the ER-resident membrane protein MMM1 and the outer mitochondrial membrane-resident beta-barrel protein MDM10. The protein is Mitochondrial distribution and morphology protein 34 of Pyricularia oryzae (strain 70-15 / ATCC MYA-4617 / FGSC 8958) (Rice blast fungus).